The chain runs to 462 residues: MTTDIRALYTRLPAIDRLLRDPAFSPLLAQHGHSQVVAQLRQMLDEAREQISQRQTLPDWSHDWLHACEQRLTAGQRSALRPVFNLTGTVLHTNLGRAIQAESAVEAVASAMRAPVTLEYDLDDAGRGHRDRAIADLLCQITGAEDACIVNNNAAAVLLMLAATASGREVVVSRGELVEIGGAFRIPDVMRQAGCQLHEVGTTNRTHAKDYRQAVNDNTALLMKVHTSNYSIEGFTKAVDEAELAAIGRELDIPVVADLGSGSLVDLSQYGLPKEPMPQEMIAAGVSLVSFSGDKLLGGPQAGIIVGKRALIARLQSHPLKRALRADKMTLAALEATLRLYQHPEVLTERLPTLRLLTRPAEEIRRLAERLLPDLAAHYADFAVSVAACQSQIGSGSLPVDRLPSAALTFTPHDGRGSRLEALAARWRALPCPVIGRIDDGRLWLDLRCLEDETRFMEMLLR.

K295 is subject to N6-(pyridoxal phosphate)lysine.

It belongs to the SelA family. As to quaternary structure, homodecamer; pentamer of dimers. Binds only one seryl-tRNA(Sec) per dimer. Pyridoxal 5'-phosphate is required as a cofactor.

Its subcellular location is the cytoplasm. The enzyme catalyses L-seryl-tRNA(Sec) + selenophosphate + H(+) = L-selenocysteinyl-tRNA(Sec) + phosphate. The protein operates within aminoacyl-tRNA biosynthesis; selenocysteinyl-tRNA(Sec) biosynthesis; selenocysteinyl-tRNA(Sec) from L-seryl-tRNA(Sec) (bacterial route): step 1/1. In terms of biological role, converts seryl-tRNA(Sec) to selenocysteinyl-tRNA(Sec) required for selenoprotein biosynthesis. This chain is L-seryl-tRNA(Sec) selenium transferase, found in Klebsiella pneumoniae (strain 342).